The sequence spans 237 residues: Uridylate kinase (237 aa).

ATP is bound at residue 9–12 (KLSG). Residue Gly51 participates in UMP binding. Gly52 and Arg56 together coordinate ATP. Residues Asp71 and 132–139 (CGNPFFTT) each bind UMP. ATP-binding residues include Thr159, Tyr165, and Asp168.

It belongs to the UMP kinase family. Homohexamer.

It localises to the cytoplasm. The enzyme catalyses UMP + ATP = UDP + ADP. The protein operates within pyrimidine metabolism; CTP biosynthesis via de novo pathway; UDP from UMP (UMPK route): step 1/1. Its activity is regulated as follows. Inhibited by UTP. Functionally, catalyzes the reversible phosphorylation of UMP to UDP. This is Uridylate kinase from Prochlorococcus marinus (strain NATL1A).